Consider the following 586-residue polypeptide: CTP synthase 2 (586 aa).

The Glutamine amidotransferase type-1 domain maps to 300-554; it reads SIALVGKYTK…LAATGTLNTH (255 aa). Catalysis depends on for GATase activity residues Cys-399, His-526, and Glu-528. Ser-568, Ser-571, and Ser-574 each carry phosphoserine.

The protein belongs to the CTP synthase family.

The enzyme catalyses UTP + L-glutamine + ATP + H2O = CTP + L-glutamate + ADP + phosphate + 2 H(+). It functions in the pathway pyrimidine metabolism; CTP biosynthesis via de novo pathway; CTP from UDP: step 2/2. Catalyzes the ATP-dependent amination of UTP to CTP with either L-glutamine or ammonia as the source of nitrogen. Constitutes the rate-limiting enzyme in the synthesis of cytosine nucleotides. The polypeptide is CTP synthase 2 (Ctps2) (Rattus norvegicus (Rat)).